The following is a 71-amino-acid chain: Alpha-cobratoxin (71 aa).

5 disulfide bridges follow: cysteine 3/cysteine 20, cysteine 14/cysteine 41, cysteine 26/cysteine 30, cysteine 45/cysteine 56, and cysteine 57/cysteine 62.

Belongs to the three-finger toxin family. Long-chain subfamily. Type II alpha-neurotoxin sub-subfamily. In terms of assembly, monomer, homo- or heterodimer with cytotoxins 1 (P60305), 2 (AC P01445), and 3 (AC P01446); disulfide-linked. In terms of processing, in homodimer alpha-cobratoxin, selective reduction of Cys(26)-Cys(30) in one subunit does not affect the activity against the alpha-7/CHRNA7 nAChR, whereas its reduction in both subunits almost prevents alpha-7/CHRNA7 nAChR recognition. On the contrary, reduction of one or both Cys(26)-Cys(30) disulfide bonds in the homodimer considerably potentiates inhibition of the alpha-3-beta-2/CHRNA3-CHRNB2 nAChR by the toxin. As to expression, expressed by the venom gland.

Its subcellular location is the secreted. Monomer: binds with high affinity to muscular (alpha-1-beta-1-gamma-delta/CHRNA1-CHRNB1-CHRNG-CHRND) nAChR (tested on Torpedo californica, Kd=0.2-4.5 nM) and neuronal alpha-7/CHRNA7 nicotinic acetylcholine receptors (Kd=13-105 nM). Also inhibits GABA(A) channels. Heteropentamer targets studied are composed of alpha-1-beta-3-gamma-2 (GABRA1-GABRB3-GABRG2) subunits (IC(50)=236 nM), alpha-1-beta-2-gamma-2 (GABRA1-GABRB2-GABRG2) subunits (IC(50)=469 nM), alpha-2-beta-2-gamma-2 (GABRA2-GABRB2-GABRG2) subunits (IC(50)=485 nM), alpha-5-beta-3-gamma-2 (GABRA5-GABRB3-GABRG2) subunits (IC(50)=635 nM), and alpha-2-beta-3-gamma-2 (GABRA2-GABRB3-GABRG2) subunits (IC(50)=1099 nM) (activated by 10 uM GABA). In terms of biological role, homodimer: binds with high affinity (but lower than the monomeric form) to muscular (IC(50)=9.7 nM) and with low affinity to neuronal alpha-7/CHRNA7 nAChRs (IC(50)=1370 nM). However, it acquires (compared to the monomeric form) the capacity to block alpha-3/beta-2 (CHRNA3/CHRNB2) nAChRs. Functionally, heterodimer with cytotoxin 3 (AC P01446): is slightly more active than the homodimer in inhibiting alpha-7/CHRNA7 nAChR and is considerably more active in blocking the alpha-3-beta-2/CHRNA3-CHRNB2 nAChR. This Naja kaouthia (Monocled cobra) protein is Alpha-cobratoxin.